A 505-amino-acid chain; its full sequence is tRNA (guanine(6)-N(2))-methyltransferase THUMP3 (505 aa).

The tract at residues 145–182 (KAKRRKANQSAGKEKADCGQGDKADEKDGKKKHASSTS) is disordered. Over residues 156 to 173 (GKEKADCGQGDKADEKDG) the composition is skewed to basic and acidic residues. The THUMP domain occupies 171–287 (KDGKKKHASS…DNEVIVAIAL (117 aa)).

The protein belongs to the methyltransferase superfamily. In terms of assembly, part of the heterodimeric THUMPD3-TRM112 methyltransferase complex; this complex forms an active tRNA methyltransferase, where TRMT112 acts as an activator of the catalytic subunit THUMPD3. In terms of tissue distribution, ubiquitously expressed. Abundantly expressed in the testis, also expressed in the brain, heart, kidney, liver, lung, muscle and spleen.

It is found in the cytoplasm. The catalysed reaction is guanosine(6) in tRNA + S-adenosyl-L-methionine = N(2)-methylguanosine(6) in tRNA + S-adenosyl-L-homocysteine + H(+). It catalyses the reaction guanosine(7) in tRNA + S-adenosyl-L-methionine = N(2)-methylguanosine(7) in tRNA + S-adenosyl-L-homocysteine + H(+). Catalytic subunit of the THUMPD3-TRM112 methyltransferase complex, that specifically mediates the S-adenosyl-L-methionine-dependent N(2)-methylation of guanosine nucleotide at position 6 (m2G6) in tRNAs. This is one of the major tRNA (guanine-N(2))-methyltransferases. Also catalyzes the S-adenosyl-L-methionine-dependent N(2)-methylation of guanosine nucleotide at position 7 of tRNA(Trp). The chain is tRNA (guanine(6)-N(2))-methyltransferase THUMP3 from Mus musculus (Mouse).